Reading from the N-terminus, the 260-residue chain is Type III pantothenate kinase (260 aa).

An ATP-binding site is contributed by 6 to 13 (DAGNTRTK). Residues Tyr88 and 95 to 98 (GVDR) each bind substrate. Residue Asp97 is the Proton acceptor of the active site. Ser121 provides a ligand contact to ATP. Position 184 (Thr184) interacts with substrate.

Belongs to the type III pantothenate kinase family. Homodimer. The cofactor is NH4(+). Requires K(+) as cofactor.

It localises to the cytoplasm. It catalyses the reaction (R)-pantothenate + ATP = (R)-4'-phosphopantothenate + ADP + H(+). Its pathway is cofactor biosynthesis; coenzyme A biosynthesis; CoA from (R)-pantothenate: step 1/5. Its function is as follows. Catalyzes the phosphorylation of pantothenate (Pan), the first step in CoA biosynthesis. This is Type III pantothenate kinase from Saccharophagus degradans (strain 2-40 / ATCC 43961 / DSM 17024).